Reading from the N-terminus, the 153-residue chain is ORM1-like protein 1 (153 aa).

At 1–26 (MNVGVAHSEVNPNTRVMNSRGMWLTY) the chain is on the cytoplasmic side. A run of 2 helical transmembrane segments spans residues 27 to 46 (ALGV…FSVP) and 47 to 64 (VAWT…YVFL). At 65 to 100 (HAVKGTPFETPDQGKARLLTHWEQLDYGVQFTSSRK) the chain is on the cytoplasmic side. A helical transmembrane segment spans residues 101-121 (FFTISPIILYFLASFYTKYDT). Over 122 to 123 (TH) the chain is Extracellular. The chain crosses the membrane as a helical span at residues 124 to 140 (FILNTASLLSVLIPKMP). Over 141-153 (QLHGVRIFGINKY) the chain is Cytoplasmic.

Belongs to the ORM family. Ceramide-sensitive subunit of the serine palmitoyltransferase (SPT) complex, which is also composed of SPTLC1, SPTLC2/3 and SPTSSA/B.

It is found in the endoplasmic reticulum membrane. In terms of biological role, plays an essential role in the homeostatic regulation of sphingolipid de novo biosynthesis by modulating the activity of the serine palmitoyltransferase (SPT) in response to ceramide levels. When complexed to SPT, the binding of ceramides to its N-terminus stabilizes a conformation that block SPT substrate entry, hence preventing SPT catalytic activity. Through this mechanism, maintains ceramide levels at sufficient concentrations for the production of complex sphingolipids, but which prevents the accumulation of ceramides to levels that trigger apoptosis. This Bos taurus (Bovine) protein is ORM1-like protein 1 (ORMDL1).